A 207-amino-acid polypeptide reads, in one-letter code: High frequency lysogenization protein HflD homolog (207 aa).

This sequence belongs to the HflD family.

It is found in the cytoplasm. Its subcellular location is the cell inner membrane. In Azotobacter vinelandii (strain DJ / ATCC BAA-1303), this protein is High frequency lysogenization protein HflD homolog.